Reading from the N-terminus, the 1270-residue chain is DNA-directed RNA polymerase subunit beta (1270 aa).

This sequence belongs to the RNA polymerase beta chain family. The RNAP catalytic core consists of 2 alpha, 1 beta, 1 beta' and 1 omega subunit. When a sigma factor is associated with the core the holoenzyme is formed, which can initiate transcription.

The enzyme catalyses RNA(n) + a ribonucleoside 5'-triphosphate = RNA(n+1) + diphosphate. DNA-dependent RNA polymerase catalyzes the transcription of DNA into RNA using the four ribonucleoside triphosphates as substrates. This Porphyromonas cangingivalis protein is DNA-directed RNA polymerase subunit beta.